A 119-amino-acid chain; its full sequence is uncharacterized protein (119 aa).

This is an uncharacterized protein from Bos taurus (Bovine).